Here is a 531-residue protein sequence, read N- to C-terminus: T-complex protein 1 subunit zeta (531 aa).

Ala-2 is modified (N-acetylalanine). Lys-5 is subject to N6-acetyllysine. Gly-39 lines the ADP pocket. Gly-39 lines the ATP pocket. Mg(2+) is bound at residue Asp-90. Positions 91, 92, 93, 94, 158, and 159 each coordinate ADP. 3 residues coordinate ATP: Gly-91, Thr-92, and Thr-93. The residue at position 199 (Lys-199) is an N6-acetyllysine. A Phosphoserine modification is found at Ser-205. A Glycyl lysine isopeptide (Lys-Gly) (interchain with G-Cter in SUMO2) cross-link involves residue Lys-251. N6-acetyllysine is present on residues Lys-287, Lys-365, Lys-377, and Lys-388. Residue Ala-411 coordinates ADP. ATP is bound by residues Ala-411, Gly-412, Asp-496, and Lys-501. Asp-496 provides a ligand contact to ADP.

Belongs to the TCP-1 chaperonin family. In terms of assembly, component of the chaperonin-containing T-complex (TRiC), a hexadecamer composed of two identical back-to-back stacked rings enclosing a protein folding chamber. Each ring is made up of eight different subunits: TCP1/CCT1, CCT2, CCT3, CCT4, CCT5, CCT6A/CCT6, CCT7, CCT8. Interacts with PACRG.

It localises to the cytoplasm. The catalysed reaction is ATP + H2O = ADP + phosphate + H(+). Its function is as follows. Component of the chaperonin-containing T-complex (TRiC), a molecular chaperone complex that assists the folding of actin, tubulin and other proteins upon ATP hydrolysis. The TRiC complex mediates the folding of WRAP53/TCAB1, thereby regulating telomere maintenance. This chain is T-complex protein 1 subunit zeta (CCT6A), found in Bos taurus (Bovine).